The chain runs to 73 residues: Pollen allergen Amb t 5 (73 aa).

A signal peptide spans 1-20 (MKNIFMLTLFILIITSTIKA). Residues 21 to 33 (IGSTNEVDEIKQE) constitute a propeptide that is removed on maturation. 4 disulfides stabilise this stretch: C38-C68, C44-C59, C51-C61, and C52-C72.

In terms of assembly, monomer.

The chain is Pollen allergen Amb t 5 from Ambrosia trifida (Giant ragweed).